We begin with the raw amino-acid sequence, 150 residues long: Arginine repressor (150 aa).

This sequence belongs to the ArgR family.

It localises to the cytoplasm. Its pathway is amino-acid biosynthesis; L-arginine biosynthesis [regulation]. Its function is as follows. Regulates arginine biosynthesis genes. In Symbiobacterium thermophilum (strain DSM 24528 / JCM 14929 / IAM 14863 / T), this protein is Arginine repressor.